Here is a 637-residue protein sequence, read N- to C-terminus: Pentatricopeptide repeat-containing protein At1g12300, mitochondrial (637 aa).

The N-terminal 95 residues, 1-95, are a transit peptide targeting the mitochondrion; that stretch reads MVKLMIRRLS…PTVIDFSRLF (95 aa). 15 PPR repeats span residues 87–121, 122–156, 157–191, 192–226, 227–261, 262–296, 297–331, 332–366, 367–401, 402–436, 437–471, 472–506, 507–541, 542–576, and 577–611; these read TVID…GIAH, NLYT…GYEP, NTIT…GHKP, DLIT…GCQP, NAVT…NIKL, DAVK…GITT, NIIT…KINP, NVVT…GIAP, DTIT…GCDP, NIRT…GVVA, DTVT…KVPP, NIVT…KMEL, DIGI…GVKP, GVKT…GHAP, and DGWT…GFSV.

Belongs to the PPR family. P subfamily.

The protein resides in the mitochondrion. This is Pentatricopeptide repeat-containing protein At1g12300, mitochondrial from Arabidopsis thaliana (Mouse-ear cress).